Reading from the N-terminus, the 468-residue chain is Cytochrome bd ubiquinol oxidase subunit 1 (468 aa).

The next 9 helical transmembrane spans lie at 15 to 35 (TLFH…VALM), 51 to 71 (AKFW…TGIL), 95 to 115 (LAIE…LWIF), 124 to 144 (IHAL…FWIL), 177 to 197 (LWVE…FFIA), 219 to 239 (LAMI…HMQA), 331 to 351 (FRIM…GLWL), 366 to 386 (IMIA…IMTE), and 416 to 436 (SIIA…FLFI). A heme b-binding site is contributed by H18. H183 contacts heme b. M334 is a binding site for heme b. Residues 448-468 (HHDVPVSTDPFSQEVYHGISS) form a disordered region.

Belongs to the cytochrome ubiquinol oxidase subunit 1 family. As to quaternary structure, heterodimer of subunits I and II. The cofactor is heme b. Heme d cis-diol serves as cofactor.

Its subcellular location is the cell membrane. It catalyses the reaction 2 a ubiquinol + O2(in) + 4 H(+)(in) = 2 a ubiquinone + 2 H2O(in) + 4 H(+)(out). This Bacillus subtilis (strain 168) protein is Cytochrome bd ubiquinol oxidase subunit 1 (cydA).